We begin with the raw amino-acid sequence, 314 residues long: tRNA-cytidine(32) 2-sulfurtransferase (314 aa).

Positions 49-54 (SGGKDS) match the PP-loop motif motif. The [4Fe-4S] cluster site is built by C124, C127, and C215.

This sequence belongs to the TtcA family. Homodimer. It depends on Mg(2+) as a cofactor. The cofactor is [4Fe-4S] cluster.

The protein resides in the cytoplasm. It catalyses the reaction cytidine(32) in tRNA + S-sulfanyl-L-cysteinyl-[cysteine desulfurase] + AH2 + ATP = 2-thiocytidine(32) in tRNA + L-cysteinyl-[cysteine desulfurase] + A + AMP + diphosphate + H(+). It participates in tRNA modification. Functionally, catalyzes the ATP-dependent 2-thiolation of cytidine in position 32 of tRNA, to form 2-thiocytidine (s(2)C32). The sulfur atoms are provided by the cysteine/cysteine desulfurase (IscS) system. The chain is tRNA-cytidine(32) 2-sulfurtransferase from Pasteurella multocida (strain Pm70).